The primary structure comprises 298 residues: Probable 2-(5''-triphosphoribosyl)-3'-dephosphocoenzyme-A synthase 2 (298 aa).

It belongs to the CitG/MdcB family.

It carries out the reaction 3'-dephospho-CoA + ATP = 2'-(5''-triphospho-alpha-D-ribosyl)-3'-dephospho-CoA + adenine. The chain is Probable 2-(5''-triphosphoribosyl)-3'-dephosphocoenzyme-A synthase 2 from Salmonella typhi.